The chain runs to 137 residues: Large ribosomal subunit protein uL16 (137 aa).

This sequence belongs to the universal ribosomal protein uL16 family. In terms of assembly, part of the 50S ribosomal subunit.

In terms of biological role, binds 23S rRNA and is also seen to make contacts with the A and possibly P site tRNAs. The chain is Large ribosomal subunit protein uL16 from Alcanivorax borkumensis (strain ATCC 700651 / DSM 11573 / NCIMB 13689 / SK2).